The chain runs to 414 residues: 3-oxoacyl-[acyl-carrier-protein] synthase 2 (414 aa).

Residues lysine 3–arginine 413 form the Ketosynthase family 3 (KS3) domain. Active-site for beta-ketoacyl synthase activity residues include cysteine 164, histidine 304, and histidine 342.

It belongs to the thiolase-like superfamily. Beta-ketoacyl-ACP synthases family. In terms of assembly, homodimer.

The catalysed reaction is a fatty acyl-[ACP] + malonyl-[ACP] + H(+) = a 3-oxoacyl-[ACP] + holo-[ACP] + CO2. It carries out the reaction (9Z)-hexadecenoyl-[ACP] + malonyl-[ACP] + H(+) = 3-oxo-(11Z)-octadecenoyl-[ACP] + holo-[ACP] + CO2. It participates in lipid metabolism; fatty acid biosynthesis. Its function is as follows. Involved in the type II fatty acid elongation cycle. Catalyzes the elongation of a wide range of acyl-ACP by the addition of two carbons from malonyl-ACP to an acyl acceptor. Can efficiently catalyze the conversion of palmitoleoyl-ACP (cis-hexadec-9-enoyl-ACP) to cis-vaccenoyl-ACP (cis-octadec-11-enoyl-ACP), an essential step in the thermal regulation of fatty acid composition. This Vibrio cholerae serotype O1 (strain ATCC 39315 / El Tor Inaba N16961) protein is 3-oxoacyl-[acyl-carrier-protein] synthase 2 (fabF).